The sequence spans 180 residues: Inner membrane-spanning protein YciB (180 aa).

6 consecutive transmembrane segments (helical) span residues L4–I24, Q25–I45, V49–I69, I76–I96, I118–V138, and F150–L170.

It belongs to the YciB family.

The protein localises to the cell inner membrane. Its function is as follows. Plays a role in cell envelope biogenesis, maintenance of cell envelope integrity and membrane homeostasis. The sequence is that of Inner membrane-spanning protein YciB from Rickettsia africae (strain ESF-5).